A 160-amino-acid polypeptide reads, in one-letter code: MEKDDLTHFNDEKRAKMVDVTSKSETKRRAIASATIHMNEETLARIHAGKIAKGDVLAVAQVAGIMAAKKTSELIPMCHPIMTTKADISFEDDGKTALTITSEVVTVGKTGVEMEALTAVTIAALTIYDMCKAMDKGMRIEKTYLVEKTGGKSGTFKAEA.

Substrate contacts are provided by residues 77-79 and 114-115; these read MCH and ME. Asp129 is a catalytic residue.

Belongs to the MoaC family. Homohexamer; trimer of dimers.

It catalyses the reaction (8S)-3',8-cyclo-7,8-dihydroguanosine 5'-triphosphate = cyclic pyranopterin phosphate + diphosphate. It functions in the pathway cofactor biosynthesis; molybdopterin biosynthesis. Catalyzes the conversion of (8S)-3',8-cyclo-7,8-dihydroguanosine 5'-triphosphate to cyclic pyranopterin monophosphate (cPMP). The chain is Cyclic pyranopterin monophosphate synthase from Listeria monocytogenes serovar 1/2a (strain ATCC BAA-679 / EGD-e).